The chain runs to 176 residues: Shikimate kinase (176 aa).

14 to 19 (GAGKSS) is a binding site for ATP. Ser-18 contacts Mg(2+). Residues Asp-36, Arg-60, and Gly-82 each contribute to the substrate site. Residue Arg-120 coordinates ATP. Arg-138 contacts substrate.

Belongs to the shikimate kinase family. In terms of assembly, monomer. Mg(2+) serves as cofactor.

It is found in the cytoplasm. The enzyme catalyses shikimate + ATP = 3-phosphoshikimate + ADP + H(+). The protein operates within metabolic intermediate biosynthesis; chorismate biosynthesis; chorismate from D-erythrose 4-phosphate and phosphoenolpyruvate: step 5/7. In terms of biological role, catalyzes the specific phosphorylation of the 3-hydroxyl group of shikimic acid using ATP as a cosubstrate. The sequence is that of Shikimate kinase from Dehalococcoides mccartyi (strain ATCC BAA-2100 / JCM 16839 / KCTC 5957 / BAV1).